A 174-amino-acid chain; its full sequence is MDRAQKREFVDQLAAVFAETSMVVVSRNDGLTVADVTALRVKMREAGAQYKVAKNRLAHLALEGTRFDGLKPMLKGPTALAWSQDPVAVAKVAVEFAKTNEKFVLVGGALGTQMLDASGVKALAELPSLDQLRAKLLGLIQAPATKVAGVLQAPAGQLARVFAAYARADEADAA.

The protein belongs to the universal ribosomal protein uL10 family. Part of the ribosomal stalk of the 50S ribosomal subunit. The N-terminus interacts with L11 and the large rRNA to form the base of the stalk. The C-terminus forms an elongated spine to which L12 dimers bind in a sequential fashion forming a multimeric L10(L12)X complex.

Functionally, forms part of the ribosomal stalk, playing a central role in the interaction of the ribosome with GTP-bound translation factors. The sequence is that of Large ribosomal subunit protein uL10 from Acidiphilium cryptum (strain JF-5).